Reading from the N-terminus, the 293-residue chain is Ribosomal protein L11 methyltransferase (293 aa).

Thr145, Gly166, Asp188, and Asn230 together coordinate S-adenosyl-L-methionine.

It belongs to the methyltransferase superfamily. PrmA family.

It is found in the cytoplasm. The catalysed reaction is L-lysyl-[protein] + 3 S-adenosyl-L-methionine = N(6),N(6),N(6)-trimethyl-L-lysyl-[protein] + 3 S-adenosyl-L-homocysteine + 3 H(+). Functionally, methylates ribosomal protein L11. The sequence is that of Ribosomal protein L11 methyltransferase from Shewanella halifaxensis (strain HAW-EB4).